Consider the following 86-residue polypeptide: ATP synthase subunit c (86 aa).

2 consecutive transmembrane segments (helical) span residues 4–24 (AIVA…GIGA) and 57–77 (VAIA…LLFV).

Belongs to the ATPase C chain family. F-type ATPases have 2 components, F(1) - the catalytic core - and F(0) - the membrane proton channel. F(1) has five subunits: alpha(3), beta(3), gamma(1), delta(1), epsilon(1). F(0) has three main subunits: a(1), b(2) and c(10-14). The alpha and beta chains form an alternating ring which encloses part of the gamma chain. F(1) is attached to F(0) by a central stalk formed by the gamma and epsilon chains, while a peripheral stalk is formed by the delta and b chains.

The protein localises to the cell membrane. F(1)F(0) ATP synthase produces ATP from ADP in the presence of a proton or sodium gradient. F-type ATPases consist of two structural domains, F(1) containing the extramembraneous catalytic core and F(0) containing the membrane proton channel, linked together by a central stalk and a peripheral stalk. During catalysis, ATP synthesis in the catalytic domain of F(1) is coupled via a rotary mechanism of the central stalk subunits to proton translocation. Functionally, key component of the F(0) channel; it plays a direct role in translocation across the membrane. A homomeric c-ring of between 10-14 subunits forms the central stalk rotor element with the F(1) delta and epsilon subunits. The protein is ATP synthase subunit c of Clostridioides difficile (strain 630) (Peptoclostridium difficile).